The chain runs to 130 residues: Small ribosomal subunit protein uS9 (130 aa).

This sequence belongs to the universal ribosomal protein uS9 family.

This is Small ribosomal subunit protein uS9 from Cupriavidus taiwanensis (strain DSM 17343 / BCRC 17206 / CCUG 44338 / CIP 107171 / LMG 19424 / R1) (Ralstonia taiwanensis (strain LMG 19424)).